The sequence spans 360 residues: Phospho-N-acetylmuramoyl-pentapeptide-transferase (360 aa).

Transmembrane regions (helical) follow at residues 21-41 (YLTLRAILSTLTALLIAILIG), 73-93 (TMGGLLILAAIVVSGLLWADL), 97-117 (YVLVTLTVVVAYGIIGFVDDY), 134-154 (YFWQSVVALGVAFYLYSSATM), 168-188 (VFPQLGIFFIIITYFAIVGTS), 199-219 (GLAIVPTILVAGAFAIFAYVT), 239-259 (LVIVCTAMVGAGLGFLWFNTY), 263-283 (VFMGDVGSLALGGTLGVLAVL), 288-308 (LVLIIMGGVFVMETLSVILQV), and 338-358 (VIVRFWIISIILVLVGLATLK).

The protein belongs to the glycosyltransferase 4 family. MraY subfamily. Mg(2+) is required as a cofactor.

It is found in the cell inner membrane. It catalyses the reaction UDP-N-acetyl-alpha-D-muramoyl-L-alanyl-gamma-D-glutamyl-meso-2,6-diaminopimeloyl-D-alanyl-D-alanine + di-trans,octa-cis-undecaprenyl phosphate = di-trans,octa-cis-undecaprenyl diphospho-N-acetyl-alpha-D-muramoyl-L-alanyl-D-glutamyl-meso-2,6-diaminopimeloyl-D-alanyl-D-alanine + UMP. The protein operates within cell wall biogenesis; peptidoglycan biosynthesis. Functionally, catalyzes the initial step of the lipid cycle reactions in the biosynthesis of the cell wall peptidoglycan: transfers peptidoglycan precursor phospho-MurNAc-pentapeptide from UDP-MurNAc-pentapeptide onto the lipid carrier undecaprenyl phosphate, yielding undecaprenyl-pyrophosphoryl-MurNAc-pentapeptide, known as lipid I. The sequence is that of Phospho-N-acetylmuramoyl-pentapeptide-transferase from Alteromonas mediterranea (strain DSM 17117 / CIP 110805 / LMG 28347 / Deep ecotype).